Consider the following 458-residue polypeptide: Argininosuccinate lyase (458 aa).

It belongs to the lyase 1 family. Argininosuccinate lyase subfamily.

The protein resides in the cytoplasm. It catalyses the reaction 2-(N(omega)-L-arginino)succinate = fumarate + L-arginine. It functions in the pathway amino-acid biosynthesis; L-arginine biosynthesis; L-arginine from L-ornithine and carbamoyl phosphate: step 3/3. The sequence is that of Argininosuccinate lyase from Citrifermentans bemidjiense (strain ATCC BAA-1014 / DSM 16622 / JCM 12645 / Bem) (Geobacter bemidjiensis).